A 295-amino-acid chain; its full sequence is ATP synthase gamma chain (295 aa).

The protein belongs to the ATPase gamma chain family. In terms of assembly, F-type ATPases have 2 components, CF(1) - the catalytic core - and CF(0) - the membrane proton channel. CF(1) has five subunits: alpha(3), beta(3), gamma(1), delta(1), epsilon(1). CF(0) has three main subunits: a, b and c.

Its subcellular location is the cell inner membrane. In terms of biological role, produces ATP from ADP in the presence of a proton gradient across the membrane. The gamma chain is believed to be important in regulating ATPase activity and the flow of protons through the CF(0) complex. The chain is ATP synthase gamma chain from Campylobacter curvus (strain 525.92).